The sequence spans 194 residues: Putative manganese efflux pump MntP (194 aa).

Transmembrane regions (helical) follow at residues 6 to 26, 35 to 55, 66 to 86, 109 to 129, 142 to 162, and 174 to 194; these read LILV…GLAL, WLFA…GLYL, VAAI…LWEA, GVLG…LDAL, VPLT…LGLL, and RAEL…LVGV.

The protein belongs to the MntP (TC 9.B.29) family.

Its subcellular location is the cell membrane. Probably functions as a manganese efflux pump. The polypeptide is Putative manganese efflux pump MntP (Moorella thermoacetica (strain ATCC 39073 / JCM 9320)).